A 325-amino-acid chain; its full sequence is uncharacterized protein (325 aa).

Residues 1-75 (MSQPPEHPGN…PPPGYPTHLQ (75 aa)) are disordered. The segment covering 24-70 (YPPPGYGAPPPPPGYGPPPGTYLPPGYNAPPPPPGYGPPPGPPPPGY) has biased composition (pro residues). 4 consecutive transmembrane segments (helical) span residues 96–116 (AVTLVVPVLAYAVALAAVIGA), 153–173 (IVMFLGYIALFALVLYMHAGI), 205–225 (LLIVAVTFIGGLLCVIPGLIF), and 273–293 (LVGELLCFVGMLIGIPVAALI).

It localises to the cell membrane. This is an uncharacterized protein from Mycobacterium tuberculosis (strain ATCC 25618 / H37Rv).